We begin with the raw amino-acid sequence, 152 residues long: Urease accessory protein UreE (152 aa).

Belongs to the UreE family.

The protein resides in the cytoplasm. Functionally, involved in urease metallocenter assembly. Binds nickel. Probably functions as a nickel donor during metallocenter assembly. This Citrobacter koseri (strain ATCC BAA-895 / CDC 4225-83 / SGSC4696) protein is Urease accessory protein UreE.